We begin with the raw amino-acid sequence, 182 residues long: Large ribosomal subunit protein uL10 (182 aa).

The protein belongs to the universal ribosomal protein uL10 family. As to quaternary structure, part of the ribosomal stalk of the 50S ribosomal subunit. The N-terminus interacts with L11 and the large rRNA to form the base of the stalk. The C-terminus forms an elongated spine to which L12 dimers bind in a sequential fashion forming a multimeric L10(L12)X complex.

Forms part of the ribosomal stalk, playing a central role in the interaction of the ribosome with GTP-bound translation factors. This Janthinobacterium sp. (strain Marseille) (Minibacterium massiliensis) protein is Large ribosomal subunit protein uL10.